We begin with the raw amino-acid sequence, 243 residues long: uncharacterized protein (243 aa).

Residues 2-240 (TKIFAHRGAS…DFPEKASALL (239 aa)) form the GP-PDE domain.

This is an uncharacterized protein from Bacillus subtilis (strain 168).